A 423-amino-acid polypeptide reads, in one-letter code: Chitinase 1 (423 aa).

Residues 1 to 22 (MLSFVKKSIALVAALQAVTALA) form the signal peptide. Residues 23 to 34 (TPISSEAGVEKR) constitute a propeptide that is removed on maturation. One can recognise a GH18 domain in the interval 38-401 (FANAVYFTNW…STSHQGLGSQ (364 aa)). Chitin is bound by residues 102–103 (GT) and 129–132 (GGWT). E171 serves as the catalytic Proton donor. Chitin contacts are provided by residues Y172, 237 to 240 (MAYD), and W378.

Belongs to the glycosyl hydrolase 18 family. Chitinase class V subfamily.

It localises to the secreted. The catalysed reaction is Random endo-hydrolysis of N-acetyl-beta-D-glucosaminide (1-&gt;4)-beta-linkages in chitin and chitodextrins.. In Aphanocladium album (Wheat rust fungus), this protein is Chitinase 1 (CHI1).